Consider the following 620-residue polypeptide: Bicaudal D-related protein homolog (620 aa).

The segment covering 23–41 has biased composition (low complexity); sequence NNNNNSIVGGSSSSSSGGN. The interval 23–53 is disordered; sequence NNNNNSIVGGSSSSSSGGNKSKRPRQFGQYS. Coiled coils occupy residues 120 to 331 and 461 to 575; these read AAEL…LSER and VLEQ…LIDE. 2 stretches are compositionally biased toward basic and acidic residues: residues 493–503 and 509–528; these read KEERDQARGDL and RDEL…DRRT. Residues 493–528 form a disordered region; the sequence is KEERDQARGDLEDNTDRDELLSKAQTERDAANDRRT.

This sequence belongs to the BICDR family. As to quaternary structure, may homodimerize but does not interact with BicD. May interact with eEF1gamma; The interaction is probably indirect.

Functions redundantly with BicD. Involved in formation and/or development of mechanosensory organs during metamorphosis. During macrochaetae development, together with BicD, involved in Rab 6 and Spn-F stability and distribution and actin cytoskeleton organization. This chain is Bicaudal D-related protein homolog, found in Drosophila melanogaster (Fruit fly).